A 104-amino-acid chain; its full sequence is MSYVIAAPEALVAAATDLATLGSTIGAANAAAAGSTTALLTAGADEVSAAIAAYSECTARPIRHSVRGRRRSMSGSCRPWPQVGAPMRPPRPPASRRCRARSIC.

A PE domain is found at 1–60 (MSYVIAAPEALVAAATDLATLGSTIGAANAAAAGSTTALLTAGADEVSAAIAAYSECTAR). The disordered stretch occupies residues 64–104 (HSVRGRRRSMSGSCRPWPQVGAPMRPPRPPASRRCRARSIC). Positions 94–104 (ASRRCRARSIC) are enriched in basic residues.

This sequence belongs to the mycobacterial PE family. PGRS subfamily.

In terms of biological role, binds fibronectin. May contribute to pathogenicity. In Mycobacterium tuberculosis (strain ATCC 25618 / H37Rv), this protein is PE-PGRS family protein PE_PGRS60.